The following is a 349-amino-acid chain: Ferredoxin--NADP reductase (349 aa).

Residues aspartate 43, glutamine 51, tyrosine 56, valine 96, phenylalanine 131, aspartate 295, and serine 336 each contribute to the FAD site.

The protein belongs to the ferredoxin--NADP reductase type 2 family. As to quaternary structure, homodimer. FAD serves as cofactor.

The catalysed reaction is 2 reduced [2Fe-2S]-[ferredoxin] + NADP(+) + H(+) = 2 oxidized [2Fe-2S]-[ferredoxin] + NADPH. This is Ferredoxin--NADP reductase from Paraburkholderia phytofirmans (strain DSM 17436 / LMG 22146 / PsJN) (Burkholderia phytofirmans).